Reading from the N-terminus, the 896-residue chain is Protein translocase subunit SecA (896 aa).

Residues Gln87, 105–109, and Asp512 each bind ATP; that span reads GEGKT. Disordered regions lie at residues 565 to 584 and 840 to 896; these read RRID…PGSS and EAAQ…AHEA. Zn(2+) contacts are provided by Cys876, Cys878, Cys887, and His888. Residues 882-896 show a composition bias toward basic residues; the sequence is KKYKHCHGNRAAHEA.

It belongs to the SecA family. As to quaternary structure, monomer and homodimer. Part of the essential Sec protein translocation apparatus which comprises SecA, SecYEG and auxiliary proteins SecDF-YajC and YidC. Requires Zn(2+) as cofactor.

The protein resides in the cell inner membrane. The protein localises to the cytoplasm. The catalysed reaction is ATP + H2O + cellular proteinSide 1 = ADP + phosphate + cellular proteinSide 2.. In terms of biological role, part of the Sec protein translocase complex. Interacts with the SecYEG preprotein conducting channel. Has a central role in coupling the hydrolysis of ATP to the transfer of proteins into and across the cell membrane, serving both as a receptor for the preprotein-SecB complex and as an ATP-driven molecular motor driving the stepwise translocation of polypeptide chains across the membrane. This is Protein translocase subunit SecA from Mannheimia succiniciproducens (strain KCTC 0769BP / MBEL55E).